Consider the following 158-residue polypeptide: NAD(P)H-quinone oxidoreductase subunit J, chloroplastic (158 aa).

This sequence belongs to the complex I 30 kDa subunit family. In terms of assembly, NDH is composed of at least 16 different subunits, 5 of which are encoded in the nucleus.

It is found in the plastid. The protein resides in the chloroplast thylakoid membrane. It catalyses the reaction a plastoquinone + NADH + (n+1) H(+)(in) = a plastoquinol + NAD(+) + n H(+)(out). It carries out the reaction a plastoquinone + NADPH + (n+1) H(+)(in) = a plastoquinol + NADP(+) + n H(+)(out). Functionally, NDH shuttles electrons from NAD(P)H:plastoquinone, via FMN and iron-sulfur (Fe-S) centers, to quinones in the photosynthetic chain and possibly in a chloroplast respiratory chain. The immediate electron acceptor for the enzyme in this species is believed to be plastoquinone. Couples the redox reaction to proton translocation, and thus conserves the redox energy in a proton gradient. The chain is NAD(P)H-quinone oxidoreductase subunit J, chloroplastic from Helianthus annuus (Common sunflower).